We begin with the raw amino-acid sequence, 132 residues long: MGGVNIYAIIESGGKQYKVTPGQLVEVDLFDLAEGDSIELDKVLMLNDGETVTIGSPTVPGAKVTATVAGHIKGDKVFAYRFKAKSRNHKKTGHRQLYTVLTIGEILTGGAAEKPARKPRAKKTNEVTTDGA.

The disordered stretch occupies residues 112-132; that stretch reads AEKPARKPRAKKTNEVTTDGA.

The protein belongs to the bacterial ribosomal protein bL21 family. Part of the 50S ribosomal subunit. Contacts protein L20.

This protein binds to 23S rRNA in the presence of protein L20. This chain is Large ribosomal subunit protein bL21, found in Dehalococcoides mccartyi (strain ATCC BAA-2266 / KCTC 15142 / 195) (Dehalococcoides ethenogenes (strain 195)).